The chain runs to 193 residues: Xanthine phosphoribosyltransferase (193 aa).

Xanthine is bound by residues leucine 20 and asparagine 27. Position 129 to 133 (129 to 133 (ANGKA)) interacts with 5-phospho-alpha-D-ribose 1-diphosphate. Lysine 157 contacts xanthine.

This sequence belongs to the purine/pyrimidine phosphoribosyltransferase family. Xpt subfamily. Homodimer.

It is found in the cytoplasm. The enzyme catalyses XMP + diphosphate = xanthine + 5-phospho-alpha-D-ribose 1-diphosphate. The protein operates within purine metabolism; XMP biosynthesis via salvage pathway; XMP from xanthine: step 1/1. Functionally, converts the preformed base xanthine, a product of nucleic acid breakdown, to xanthosine 5'-monophosphate (XMP), so it can be reused for RNA or DNA synthesis. This is Xanthine phosphoribosyltransferase from Bifidobacterium longum (strain NCC 2705).